The primary structure comprises 20 residues: Thylakoid lumenal 22 kDa protein (20 aa).

The protein localises to the plastid. It is found in the chloroplast thylakoid lumen. In Spinacia oleracea (Spinach), this protein is Thylakoid lumenal 22 kDa protein.